A 406-amino-acid chain; its full sequence is Accessory Sec system protein translocase subunit SecY2 (406 aa).

10 helical membrane-spanning segments follow: residues 14-34, 63-83, 108-128, 131-151, 156-176, 190-210, 246-266, 285-305, 344-364, and 368-388; these read SWTVLFLFIYVLGSHLVLPFI, FSLFSVGLSPWMSAMILWQMF, FAIALIQSLAVSLSLPIEVGI, GLAILTNTILLIAGTFFLVWL, SFFGIGGSIVILMASMVANLP, LPIILSLIIMGLLFLYIAVIV, FMYAISLVSIPQYLLILIQIL, PIWLVLYQVVLFVLGIAFAFV, AVIGAIYTVIMAGGPMMIVLI, and YLQLSMIPGMFLIYSGMVYNV.

It belongs to the SecY/SEC61-alpha family. SecY2 subfamily. In terms of assembly, component of the accessory SecA2/SecY2 protein translocase complex required to export cell wall proteins. May form heterotrimers with SecE and SecG subunits.

It localises to the cell membrane. Functionally, part of the accessory SecA2/SecY2 system specifically required for export of possible cell wall proteins. The central subunit of a protein translocation channel. The sequence is that of Accessory Sec system protein translocase subunit SecY2 from Streptococcus salivarius (strain CCHSS3).